Consider the following 351-residue polypeptide: Holliday junction branch migration complex subunit RuvB (351 aa).

A disordered region spans residues 1–22; that stretch reads MSDPKANRMVSPERRSDDVGDT. Positions 2–185 are large ATPase domain (RuvB-L); the sequence is SDPKANRMVS…FGIPVRLNFY (184 aa). ATP is bound by residues Leu-24, Arg-25, Gly-66, Lys-69, Thr-70, Thr-71, 132–134, Arg-175, Tyr-185, and Arg-222; that span reads EDF. Thr-70 serves as a coordination point for Mg(2+). The tract at residues 186–256 is small ATPAse domain (RuvB-S); the sequence is TIEELESIVS…IADHALSALE (71 aa). The interval 259 to 351 is head domain (RuvB-H); sequence AAGLDAMDRR…GLFGTDESDD (93 aa). DNA is bound by residues Arg-295, Arg-314, and Arg-319.

The protein belongs to the RuvB family. In terms of assembly, homohexamer. Forms an RuvA(8)-RuvB(12)-Holliday junction (HJ) complex. HJ DNA is sandwiched between 2 RuvA tetramers; dsDNA enters through RuvA and exits via RuvB. An RuvB hexamer assembles on each DNA strand where it exits the tetramer. Each RuvB hexamer is contacted by two RuvA subunits (via domain III) on 2 adjacent RuvB subunits; this complex drives branch migration. In the full resolvosome a probable DNA-RuvA(4)-RuvB(12)-RuvC(2) complex forms which resolves the HJ.

It localises to the cytoplasm. The catalysed reaction is ATP + H2O = ADP + phosphate + H(+). In terms of biological role, the RuvA-RuvB-RuvC complex processes Holliday junction (HJ) DNA during genetic recombination and DNA repair, while the RuvA-RuvB complex plays an important role in the rescue of blocked DNA replication forks via replication fork reversal (RFR). RuvA specifically binds to HJ cruciform DNA, conferring on it an open structure. The RuvB hexamer acts as an ATP-dependent pump, pulling dsDNA into and through the RuvAB complex. RuvB forms 2 homohexamers on either side of HJ DNA bound by 1 or 2 RuvA tetramers; 4 subunits per hexamer contact DNA at a time. Coordinated motions by a converter formed by DNA-disengaged RuvB subunits stimulates ATP hydrolysis and nucleotide exchange. Immobilization of the converter enables RuvB to convert the ATP-contained energy into a lever motion, pulling 2 nucleotides of DNA out of the RuvA tetramer per ATP hydrolyzed, thus driving DNA branch migration. The RuvB motors rotate together with the DNA substrate, which together with the progressing nucleotide cycle form the mechanistic basis for DNA recombination by continuous HJ branch migration. Branch migration allows RuvC to scan DNA until it finds its consensus sequence, where it cleaves and resolves cruciform DNA. This chain is Holliday junction branch migration complex subunit RuvB, found in Bradyrhizobium diazoefficiens (strain JCM 10833 / BCRC 13528 / IAM 13628 / NBRC 14792 / USDA 110).